The sequence spans 89 residues: Small ribosomal subunit protein uS15 (89 aa).

Belongs to the universal ribosomal protein uS15 family. As to quaternary structure, part of the 30S ribosomal subunit. Forms a bridge to the 50S subunit in the 70S ribosome, contacting the 23S rRNA.

In terms of biological role, one of the primary rRNA binding proteins, it binds directly to 16S rRNA where it helps nucleate assembly of the platform of the 30S subunit by binding and bridging several RNA helices of the 16S rRNA. Its function is as follows. Forms an intersubunit bridge (bridge B4) with the 23S rRNA of the 50S subunit in the ribosome. The polypeptide is Small ribosomal subunit protein uS15 (Bacillus pumilus (strain SAFR-032)).